We begin with the raw amino-acid sequence, 366 residues long: Chorismate synthase (366 aa).

NADP(+)-binding residues include Arg-48 and Arg-54. FMN contacts are provided by residues 125–127 (RSS), 238–239 (NA), Gly-278, 293–297 (KPTSS), and Arg-319.

This sequence belongs to the chorismate synthase family. As to quaternary structure, homotetramer. FMNH2 serves as cofactor.

The catalysed reaction is 5-O-(1-carboxyvinyl)-3-phosphoshikimate = chorismate + phosphate. It participates in metabolic intermediate biosynthesis; chorismate biosynthesis; chorismate from D-erythrose 4-phosphate and phosphoenolpyruvate: step 7/7. Its function is as follows. Catalyzes the anti-1,4-elimination of the C-3 phosphate and the C-6 proR hydrogen from 5-enolpyruvylshikimate-3-phosphate (EPSP) to yield chorismate, which is the branch point compound that serves as the starting substrate for the three terminal pathways of aromatic amino acid biosynthesis. This reaction introduces a second double bond into the aromatic ring system. This Dechloromonas aromatica (strain RCB) protein is Chorismate synthase.